Here is a 60-residue protein sequence, read N- to C-terminus: Cytotoxin sagitoxin (60 aa).

4 disulfides stabilise this stretch: C3–C21, C14–C38, C42–C53, and C54–C59.

The protein belongs to the three-finger toxin family. Short-chain subfamily. Type IA cytotoxin sub-subfamily. As to quaternary structure, monomer in solution; Homodimer and oligomer (homohexamer) in the presence of negatively charged lipids forming a pore with a size ranging between 20 and 30 Angstroms. As to expression, expressed by the venom gland.

It is found in the secreted. It localises to the target cell membrane. Its function is as follows. Shows cytolytic activity on many different cells by forming pore in lipid membranes. In vivo, increases heart rate or kill the animal by cardiac arrest. In addition, it binds to heparin with high affinity, interacts with Kv channel-interacting protein 1 (KCNIP1) in a calcium-independent manner, and binds to integrin alpha-V/beta-3 (ITGAV/ITGB3) with moderate affinity. The polypeptide is Cytotoxin sagitoxin (Naja sagittifera (Andaman cobra)).